A 225-amino-acid polypeptide reads, in one-letter code: Probable iron export ATP-binding protein FetA (225 aa).

The ABC transporter domain maps to 8 to 225; the sequence is LQLQNVGYLA…EMQEARYELA (218 aa). 40-47 contacts ATP; that stretch reads GPSGCGKS.

It belongs to the ABC transporter superfamily. The complex is composed of two ATP-binding proteins (FetA) and two transmembrane proteins (FetB).

The protein localises to the cell inner membrane. Its function is as follows. Part of the ABC transporter complex FetAB, which is probably involved in iron export and enhances resistance to H(2)O(2)-mediated oxidative stress. Probably responsible for energy coupling to the transport system. This Escherichia coli (strain K12) protein is Probable iron export ATP-binding protein FetA (fetA).